Here is a 289-residue protein sequence, read N- to C-terminus: RING-H2 finger protein ATL30 (289 aa).

A helical membrane pass occupies residues 26-46; it reads VIILTVILLVVFFIGFFAIYF. The RING-type; atypical zinc-finger motif lies at 114 to 157; it reads CAICLLEFEEEHILLRLLTTCYHVFHQECIDQWLESNKTCPVCR. Residues 181-206 form a disordered region; it reads HENRDQEQTSTSNEVMLSRQSSGNNE. A compositionally biased stretch (polar residues) spans 188 to 204; that stretch reads QTSTSNEVMLSRQSSGN.

The protein belongs to the RING-type zinc finger family. ATL subfamily.

It is found in the membrane. It catalyses the reaction S-ubiquitinyl-[E2 ubiquitin-conjugating enzyme]-L-cysteine + [acceptor protein]-L-lysine = [E2 ubiquitin-conjugating enzyme]-L-cysteine + N(6)-ubiquitinyl-[acceptor protein]-L-lysine.. The protein operates within protein modification; protein ubiquitination. The chain is RING-H2 finger protein ATL30 (ATL30) from Arabidopsis thaliana (Mouse-ear cress).